We begin with the raw amino-acid sequence, 421 residues long: Trimethyllysine dioxygenase, mitochondrial (421 aa).

A mitochondrion-targeting transit peptide spans 1–15 (MWYHRLSHLHSRLQD). Lysine 179 and lysine 236 each carry N6-acetyllysine. Fe cation-binding residues include histidine 242, aspartate 244, and histidine 389.

Belongs to the gamma-BBH/TMLD family. In terms of assembly, homodimer. The cofactor is Fe(2+). It depends on L-ascorbate as a cofactor. In terms of tissue distribution, all isoforms, but isoform 8, are widely expressed in adult and fetal tissues. Isoform 8 is restricted to heart and skeletal muscle.

The protein localises to the mitochondrion matrix. The catalysed reaction is N(6),N(6),N(6)-trimethyl-L-lysine + 2-oxoglutarate + O2 = (3S)-3-hydroxy-N(6),N(6),N(6)-trimethyl-L-lysine + succinate + CO2. It participates in amine and polyamine biosynthesis; carnitine biosynthesis. In terms of biological role, converts trimethyllysine (TML) into hydroxytrimethyllysine (HTML). This is Trimethyllysine dioxygenase, mitochondrial (TMLHE) from Homo sapiens (Human).